The primary structure comprises 173 residues: RNA pyrophosphohydrolase (173 aa).

In terms of domain architecture, Nudix hydrolase spans 6 to 149 (GFRANVGIIL…KRGVYRRALR (144 aa)). The short motif at 38–59 (GGIDEGETPLDAMYRELWEEVG) is the Nudix box element.

The protein belongs to the Nudix hydrolase family. RppH subfamily. It depends on a divalent metal cation as a cofactor.

Accelerates the degradation of transcripts by removing pyrophosphate from the 5'-end of triphosphorylated RNA, leading to a more labile monophosphorylated state that can stimulate subsequent ribonuclease cleavage. The protein is RNA pyrophosphohydrolase of Psychrobacter sp. (strain PRwf-1).